The following is a 455-amino-acid chain: Probable glycine dehydrogenase (decarboxylating) subunit 1 (455 aa).

This sequence belongs to the GcvP family. N-terminal subunit subfamily. The glycine cleavage system is composed of four proteins: P, T, L and H. In this organism, the P 'protein' is a heterodimer of two subunits.

It catalyses the reaction N(6)-[(R)-lipoyl]-L-lysyl-[glycine-cleavage complex H protein] + glycine + H(+) = N(6)-[(R)-S(8)-aminomethyldihydrolipoyl]-L-lysyl-[glycine-cleavage complex H protein] + CO2. Functionally, the glycine cleavage system catalyzes the degradation of glycine. The P protein binds the alpha-amino group of glycine through its pyridoxal phosphate cofactor; CO(2) is released and the remaining methylamine moiety is then transferred to the lipoamide cofactor of the H protein. The protein is Probable glycine dehydrogenase (decarboxylating) subunit 1 of Saccharolobus islandicus (strain M.16.27) (Sulfolobus islandicus).